The primary structure comprises 653 residues: Multidomain regulatory protein MT1410 (653 aa).

A PAC domain is found at 86-142 (SGSEWRLQTDYDGSGVEERYFDFVVTPRRRADGSIEGVQLIVDDVTSRVRARQAAEA). A PPM-type phosphatase domain is found at 177–396 (DIAAEYLVAA…DDVTLLAMQR (220 aa)). Mn(2+)-binding residues include aspartate 211, valine 212, aspartate 328, and aspartate 387. An anti-sigma factor kinase region region spans residues 397 to 544 (RAPTPPLHIT…TMVRRAAFQQ (148 aa)). Residues 546–653 (IDSEFVSLVE…ADTEDIFAQE (108 aa)) form the STAS domain. Residue serine 600 is modified to Phosphoserine.

Requires Mg(2+) as cofactor. Mn(2+) serves as cofactor. In terms of processing, autophosphorylated.

It carries out the reaction O-phospho-L-seryl-[protein] + H2O = L-seryl-[protein] + phosphate. It catalyses the reaction O-phospho-L-threonyl-[protein] + H2O = L-threonyl-[protein] + phosphate. The enzyme catalyses L-seryl-[protein] + ATP = O-phospho-L-seryl-[protein] + ADP + H(+). The catalysed reaction is L-threonyl-[protein] + ATP = O-phospho-L-threonyl-[protein] + ADP + H(+). Its function is as follows. Primarily acts as an independent SigF regulator that is sensitive to the osmosensory signal, mediating the cross talk of PknD with the SigF regulon. Possesses both phosphatase and kinase activities. The kinase domain functions as a classic anti-sigma factor-like kinase to phosphorylate the anti-anti-sigma factor domain at the canonical regulatory site, and the phosphatase domain antagonizes this activity. The sequence is that of Multidomain regulatory protein MT1410 from Mycobacterium tuberculosis (strain CDC 1551 / Oshkosh).